A 167-amino-acid chain; its full sequence is SsrA-binding protein (167 aa).

Residues 139 to 158 (QNHDKRDAAKERDWQRDKQR) show a composition bias toward basic and acidic residues. Residues 139 to 167 (QNHDKRDAAKERDWQRDKQRVMRRHNRDA) are disordered.

It belongs to the SmpB family.

It is found in the cytoplasm. Required for rescue of stalled ribosomes mediated by trans-translation. Binds to transfer-messenger RNA (tmRNA), required for stable association of tmRNA with ribosomes. tmRNA and SmpB together mimic tRNA shape, replacing the anticodon stem-loop with SmpB. tmRNA is encoded by the ssrA gene; the 2 termini fold to resemble tRNA(Ala) and it encodes a 'tag peptide', a short internal open reading frame. During trans-translation Ala-aminoacylated tmRNA acts like a tRNA, entering the A-site of stalled ribosomes, displacing the stalled mRNA. The ribosome then switches to translate the ORF on the tmRNA; the nascent peptide is terminated with the 'tag peptide' encoded by the tmRNA and targeted for degradation. The ribosome is freed to recommence translation, which seems to be the essential function of trans-translation. The sequence is that of SsrA-binding protein from Xanthomonas oryzae pv. oryzae (strain PXO99A).